A 104-amino-acid chain; its full sequence is PE-PGRS family protein PE_PGRS60 (104 aa).

A PE domain is found at 1–60; that stretch reads MSYVIAAPEALVAAATDLATLGSTIGAANAAAAGSTTALLTAGADEVSAAIAAYSECTAR. Residues 64-104 form a disordered region; the sequence is HSVRGRRRSMSGSCRPWPQVGAPMRPPRPPASRRCRARSIC. Basic residues predominate over residues 94-104; it reads ASRRCRARSIC.

It belongs to the mycobacterial PE family. PGRS subfamily.

Functionally, binds fibronectin. May contribute to pathogenicity. The polypeptide is PE-PGRS family protein PE_PGRS60 (Mycobacterium tuberculosis (strain ATCC 25618 / H37Rv)).